A 211-amino-acid chain; its full sequence is Urease accessory protein UreE (211 aa).

The interval 134 to 211 (FDPEGGAYAP…DHHGHGHEHK (78 aa)) is disordered. A compositionally biased stretch (basic and acidic residues) spans 147–202 (PSHDHAGHDHAHDSHAHHDHDHGKHAQHDHGKHDHAHHDHAAHDDHHVHDEHCGHD).

It belongs to the UreE family.

Its subcellular location is the cytoplasm. Involved in urease metallocenter assembly. Binds nickel. Probably functions as a nickel donor during metallocenter assembly. This Rhodopseudomonas palustris (strain BisB18) protein is Urease accessory protein UreE.